Consider the following 269-residue polypeptide: Protein RKD1 (269 aa).

One can recognise an RWP-RK domain in the interval 106-195 (TTTTKKRRCR…EKMEGEENED (90 aa)). Positions 175–216 (LQKLISNVKELEKMEGEENEDKLRNALEKLEKEKKTIEKLPD) form a coiled coil. Residues 230–269 (CFKANHKRKRRSGMSTPITSSSSSASASSSSYSSVSGFER) form a disordered region. Positions 249 to 269 (SSSSSASASSSSYSSVSGFER) are enriched in low complexity.

The protein localises to the nucleus. In terms of biological role, putative transcription factor. The polypeptide is Protein RKD1 (RKD1) (Arabidopsis thaliana (Mouse-ear cress)).